Reading from the N-terminus, the 350-residue chain is tRNA uridine(34) hydroxylase (350 aa).

Residues 146–240 (DDPDAVFIDM…YARRARAQGL (95 aa)) enclose the Rhodanese domain. Cysteine 200 serves as the catalytic Cysteine persulfide intermediate. Over residues 319-328 (RRRRAGRENG) the composition is skewed to basic and acidic residues. The tract at residues 319–350 (RRRRAGRENGNKIFNKSRGRLNSKLSIPDPAE) is disordered.

The protein belongs to the TrhO family.

The catalysed reaction is uridine(34) in tRNA + AH2 + O2 = 5-hydroxyuridine(34) in tRNA + A + H2O. Catalyzes oxygen-dependent 5-hydroxyuridine (ho5U) modification at position 34 in tRNAs. The protein is tRNA uridine(34) hydroxylase of Salmonella typhimurium (strain LT2 / SGSC1412 / ATCC 700720).